Consider the following 872-residue polypeptide: Trichohyalin-like protein 1 (872 aa).

One can recognise an EF-hand domain in the interval 46–81 (CAIHAVERNLNLLNIDSNGAISFDEFVLAIFSFLNV). Residues 117 to 127 (QWTEGTSQTQD) are compositionally biased toward polar residues. 3 disordered regions span residues 117–759 (QWTE…ERGA), 774–813 (LQQTNVTQGEHQNQAQTASVASPEIRRNQSSASLTNDSSD), and 830–872 (EFLP…APKQ). Composition is skewed to basic and acidic residues over residues 142–155 (SLEERAVEHNRVDP), 164–190 (LPVETSEHSDSKNQHLKGDEQSQKVDQ), 218–235 (TKGEGQNKEILQKGDILA), 296–307 (GKDEPSSEHVDL), 324–348 (AAKDESRTAETPEPPIQEKEYETRD), 365–375 (RVERKGVRGPE), 399–435 (EDKKYHELQESSKEKNAGEDSETHELNSEGGEQKDSE), and 486–505 (SGEKNKMTTKIHDKLVKEDD). Positions 538-570 (NSETSDLFVQGDSQSQTNPFRGSVQGSDSNNPE) are enriched in polar residues. 3 stretches are compositionally biased toward basic and acidic residues: residues 571–584 (TQKHLALSEEKRVQ), 592–608 (RGEDEQVTEEHAQEHEG), and 664–684 (TKKDSRKELKDQSPSTKKEED). 2 stretches are compositionally biased toward polar residues: residues 699 to 708 (ENNAVSQKTC) and 718 to 729 (SPQQLAGEQSLS). Residues 730 to 751 (TKEHDPSVSESGLEERMQRDQE) show a composition bias toward basic and acidic residues. 2 stretches are compositionally biased toward polar residues: residues 774-793 (LQQTNVTQGEHQNQAQTASV) and 801-812 (NQSSASLTNDSS). A compositionally biased stretch (basic and acidic residues) spans 849–865 (LEDKQGRPQREELEPQK).

The protein belongs to the S-100 family.

The chain is Trichohyalin-like protein 1 (TCHHL1) from Bos taurus (Bovine).